A 104-amino-acid polypeptide reads, in one-letter code: Large ribosomal subunit protein uL24 (104 aa).

Belongs to the universal ribosomal protein uL24 family. As to quaternary structure, part of the 50S ribosomal subunit.

Functionally, one of two assembly initiator proteins, it binds directly to the 5'-end of the 23S rRNA, where it nucleates assembly of the 50S subunit. In terms of biological role, one of the proteins that surrounds the polypeptide exit tunnel on the outside of the subunit. In Pectobacterium carotovorum subsp. carotovorum (strain PC1), this protein is Large ribosomal subunit protein uL24.